The primary structure comprises 521 residues: Na(+)/H(+) antiporter ApNhaP (521 aa).

At 1–18 the chain is on the periplasmic side; sequence MTIEAAMGEEAIKENLEQ. A helical transmembrane segment spans residues 19–39; the sequence is FLIVLSVSLGVATLSQISSFF. Topologically, residues 40 to 41 are cytoplasmic; sequence RQ. A helical membrane pass occupies residues 42-62; sequence IPYTLLLVIVGLGLAFVDIRL. Over 63–94 the chain is Periplasmic; sequence VNLSPELILEIFLPPLLFEAAWNIRWRNLKKN. Residues 95 to 115 form a helical membrane-spanning segment; that stretch reads LFPVVLLAIIGVVISVVGIGF. Topologically, residues 116–126 are cytoplasmic; it reads SLNYFSGLSLP. The helical transmembrane segment at 127 to 147 threads the bilayer; the sequence is IALLVGAILAATDPVSVIALF. Residues 148–164 are Periplasmic-facing; that stretch reads RELGVGERLTVLMEGES. A helical transmembrane segment spans residues 165-185; the sequence is LFNDGVAVVAFSLLVGIPLGT. Over 186-194 the chain is Cytoplasmic; it reads QEFSVTNTL. The chain crosses the membrane as a helical span at residues 195-215; it reads IQFVTLQGIGIGCGGVIGFGI. The Periplasmic segment spans residues 216–245; that stretch reads SYLTQRFDLPLVEQSLTLVSAYGTYLITEE. The helical transmembrane segment at 246–266 threads the bilayer; the sequence is LGGSGVIGVVTVGLILGNFGS. Residues 267 to 276 lie on the Cytoplasmic side of the membrane; that stretch reads RIGMNPRTRL. The helical transmembrane segment at 277 to 297 threads the bilayer; it reads LVSEFWEFIAFFVNSIVFLLI. Over 298 to 311 the chain is Periplasmic; the sequence is GDQINIRGLADNGQ. Residues 312–332 traverse the membrane as a helical segment; the sequence is LILITIIALVIIRAISIYGLG. The Cytoplasmic segment spans residues 333-349; sequence TISNLITKQDISWQEET. A helical membrane pass occupies residues 350 to 370; sequence VLWWGGLRGSVSIALALSVPV. Topologically, residues 371 to 380 are periplasmic; it reads MLDGRQDIIE. A helical transmembrane segment spans residues 381–401; that stretch reads AVFGVVLFTLLVQGLTMQTVI. At 402–521 the chain is on the cytoplasmic side; that stretch reads EKLGLIGDRA…LLQEVLAKPE (120 aa).

The protein belongs to the monovalent cation:proton antiporter 1 (CPA1) transporter (TC 2.A.36) family.

The protein resides in the cell inner membrane. Na(+)/H(+) antiporter that extrudes sodium in exchange for external protons. Also shows high Ca(2+)/H(+) antiporter activity at alkaline pH. Does not catalyze exchange between Li(+) and H(+). This is Na(+)/H(+) antiporter ApNhaP (apnhaP) from Aphanothece halophytica.